Here is a 296-residue protein sequence, read N- to C-terminus: Probable endonuclease 4 (296 aa).

Positions 68, 109, 144, 178, 181, 213, 226, 228, and 258 each coordinate Zn(2+).

This sequence belongs to the AP endonuclease 2 family. Requires Zn(2+) as cofactor.

It carries out the reaction Endonucleolytic cleavage to 5'-phosphooligonucleotide end-products.. Endonuclease IV plays a role in DNA repair. It cleaves phosphodiester bonds at apurinic or apyrimidinic (AP) sites, generating a 3'-hydroxyl group and a 5'-terminal sugar phosphate. This is Probable endonuclease 4 from Staphylococcus epidermidis (strain ATCC 35984 / DSM 28319 / BCRC 17069 / CCUG 31568 / BM 3577 / RP62A).